A 231-amino-acid polypeptide reads, in one-letter code: Small ribosomal subunit protein uS3 (231 aa).

In terms of domain architecture, KH type-2 spans I39 to R107.

Belongs to the universal ribosomal protein uS3 family. Part of the 30S ribosomal subunit. Forms a tight complex with proteins S10 and S14.

In terms of biological role, binds the lower part of the 30S subunit head. Binds mRNA in the 70S ribosome, positioning it for translation. The chain is Small ribosomal subunit protein uS3 from Rhizorhabdus wittichii (strain DSM 6014 / CCUG 31198 / JCM 15750 / NBRC 105917 / EY 4224 / RW1) (Sphingomonas wittichii).